A 398-amino-acid polypeptide reads, in one-letter code: Metallophosphoesterase 1 (398 aa).

A helical transmembrane segment spans residues 25–45 (VCFVSSVLIFCEFFIYYLVIF). Residues aspartate 75, aspartate 117, asparagine 155, histidine 251, histidine 305, and histidine 307 each coordinate a divalent metal cation. The helical transmembrane segment at 359–379 (VFAIYWAAGALLVVLVLAHFQ) threads the bilayer. Residues 394 to 398 (KHKAA) carry the Di-lysine motif motif.

The protein belongs to the metallophosphoesterase superfamily. MPPE1 family. Mn(2+) is required as a cofactor.

Its subcellular location is the endoplasmic reticulum-Golgi intermediate compartment membrane. Functionally, metallophosphoesterase that catalyzes the removal of a side-chain ethanolamine-phosphate (EtNP) from the second mannose of the GPI-anchor protein intermediate. Participates in the glycan remodeling steps of GPI-anchor maturation to allow an efficient transport of GPI-anchor proteins from the endoplasmic reticulum to the Golgi. This Gallus gallus (Chicken) protein is Metallophosphoesterase 1.